The sequence spans 156 residues: MSRRHSAEKREVNPDPKFGNVILTKFMNSVMYAGKKSVAEGIVYGALEIIEAKTKQGPLPVFEQALENVMPTIEVRSRRVGGATYQVPVEVRSVRRQALGIRWLISAARDRNEKTMTERLSAELLDASNGRGNAVKKREDVHRMAEANRAFSHYRW.

Belongs to the universal ribosomal protein uS7 family. In terms of assembly, part of the 30S ribosomal subunit. Contacts proteins S9 and S11.

Functionally, one of the primary rRNA binding proteins, it binds directly to 16S rRNA where it nucleates assembly of the head domain of the 30S subunit. Is located at the subunit interface close to the decoding center, probably blocks exit of the E-site tRNA. The chain is Small ribosomal subunit protein uS7 from Rhodopseudomonas palustris (strain BisB18).